Reading from the N-terminus, the 160-residue chain is Secreted RxLR effector protein 83 (160 aa).

The N-terminal stretch at 1 to 21 is a signal peptide; that stretch reads MLVLLAATFFIYISRLTSTDA. A RxLR motif is present at residues 27–30; sequence RGLR. N-linked (GlcNAc...) asparagine glycosylation is found at Asn39 and Asn131.

It belongs to the RxLR effector family.

Its subcellular location is the secreted. The protein localises to the host nucleus. It localises to the host cytoplasm. Its function is as follows. Secreted effector that completely suppresses the host cell death induced by cell death-inducing proteins. This is Secreted RxLR effector protein 83 from Plasmopara viticola (Downy mildew of grapevine).